Reading from the N-terminus, the 615-residue chain is RNA polymerase sigma factor RpoD (615 aa).

Residues 166 to 216 (GYIDPDDGITPPAAEVPPPVDTKTAKADDDSEDEEAEATEDEEEAESGPDP) form a disordered region. The span at 194-212 (DDSEDEEAEATEDEEEAES) shows a compositional bias: acidic residues. The segment at 381-451 (MVEANLRLVI…TRSIADQART (71 aa)) is sigma-70 factor domain-2. The Interaction with polymerase core subunit RpoC signature appears at 405–408 (DLIQ). Positions 460–536 (ETINKLNRIS…DSTMQSPIDV (77 aa)) are sigma-70 factor domain-3. Positions 549 to 602 (VLSGLTAREAKVLRMRFGIDMNTDHTLEEVGKQFDVTRERIRQIEAKALRKLRH) are sigma-70 factor domain-4. The segment at residues 575–594 (LEEVGKQFDVTRERIRQIEA) is a DNA-binding region (H-T-H motif).

This sequence belongs to the sigma-70 factor family. RpoD/SigA subfamily. As to quaternary structure, interacts transiently with the RNA polymerase catalytic core.

The protein localises to the cytoplasm. Sigma factors are initiation factors that promote the attachment of RNA polymerase to specific initiation sites and are then released. This sigma factor is the primary sigma factor during exponential growth. This Pseudomonas protegens (strain DSM 19095 / LMG 27888 / CFBP 6595 / CHA0) protein is RNA polymerase sigma factor RpoD.